The chain runs to 131 residues: Small ribosomal subunit protein uS8 (131 aa).

It belongs to the universal ribosomal protein uS8 family. As to quaternary structure, part of the 30S ribosomal subunit. Contacts proteins S5 and S12.

Its function is as follows. One of the primary rRNA binding proteins, it binds directly to 16S rRNA central domain where it helps coordinate assembly of the platform of the 30S subunit. The polypeptide is Small ribosomal subunit protein uS8 (Paracidovorax citrulli (strain AAC00-1) (Acidovorax citrulli)).